Consider the following 352-residue polypeptide: Photosystem II protein D1 (352 aa).

T2 bears the N-acetylthreonine mark. T2 is modified (phosphothreonine). 3 consecutive transmembrane segments (helical) span residues 29 to 46 (YIGW…TATS), 118 to 133 (HFFL…EWEL), and 142 to 156 (WIAV…AATA). A chlorophyll a-binding site is contributed by H118. A pheophytin a-binding site is contributed by Y126. The [CaMn4O5] cluster site is built by D170 and E189. A helical transmembrane segment spans residues 197–218 (FHMLGVAGVFGGSLFSAMHGSL). H198 is a binding site for chlorophyll a. A quinone is bound by residues H215 and 264-265 (SF). H215 is a binding site for Fe cation. H272 is a binding site for Fe cation. A helical membrane pass occupies residues 274–288 (FLAAWPVVGIWFTAL). [CaMn4O5] cluster is bound by residues H332, E333, D342, and A344. A propeptide spanning residues 345 to 352 (SVEAPSIA) is cleaved from the precursor.

This sequence belongs to the reaction center PufL/M/PsbA/D family. In terms of assembly, PSII is composed of 1 copy each of membrane proteins PsbA, PsbB, PsbC, PsbD, PsbE, PsbF, PsbH, PsbI, PsbJ, PsbK, PsbL, PsbM, PsbT, PsbX, PsbY, PsbZ, Psb30/Ycf12, at least 3 peripheral proteins of the oxygen-evolving complex and a large number of cofactors. It forms dimeric complexes. The D1/D2 heterodimer binds P680, chlorophylls that are the primary electron donor of PSII, and subsequent electron acceptors. It shares a non-heme iron and each subunit binds pheophytin, quinone, additional chlorophylls, carotenoids and lipids. D1 provides most of the ligands for the Mn4-Ca-O5 cluster of the oxygen-evolving complex (OEC). There is also a Cl(-1) ion associated with D1 and D2, which is required for oxygen evolution. The PSII complex binds additional chlorophylls, carotenoids and specific lipids. is required as a cofactor. In terms of processing, tyr-161 forms a radical intermediate that is referred to as redox-active TyrZ, YZ or Y-Z. C-terminally processed by CTPA; processing is essential to allow assembly of the oxygen-evolving complex and thus photosynthetic growth.

It localises to the plastid. The protein resides in the chloroplast thylakoid membrane. It carries out the reaction 2 a plastoquinone + 4 hnu + 2 H2O = 2 a plastoquinol + O2. Its function is as follows. Photosystem II (PSII) is a light-driven water:plastoquinone oxidoreductase that uses light energy to abstract electrons from H(2)O, generating O(2) and a proton gradient subsequently used for ATP formation. It consists of a core antenna complex that captures photons, and an electron transfer chain that converts photonic excitation into a charge separation. The D1/D2 (PsbA/PsbD) reaction center heterodimer binds P680, the primary electron donor of PSII as well as several subsequent electron acceptors. The polypeptide is Photosystem II protein D1 (Chlorella ellipsoidea).